The chain runs to 837 residues: Katanin p80 WD40 repeat-containing subunit B1 homolog KTN80.4 (837 aa).

7 WD repeats span residues 14 to 54, 57 to 96, 99 to 138, 141 to 182, 184 to 222, 225 to 265, and 267 to 304; these read AHSA…AILS, GHSS…IVRT, GHRS…CIHT, GHTR…TEFK, HEGQ…LIGS, PETA…DGVD, and GWSR…TEPC. A DWD box motif is present at residues 115–131; it reads FFASGSLDTNLKIWDIR. 3 disordered regions span residues 307–328, 358–462, and 501–614; these read GDTA…DPVV, GRLS…ANPV, and LQAA…LVIN. Polar residues-rich tracts occupy residues 376–387 and 412–450; these read IGRSSTSQNSES and TFSS…TSRR. A compositionally biased stretch (low complexity) spans 509 to 520; the sequence is SPSSRNNPDLPD. Basic and acidic residues-rich tracts occupy residues 553-563 and 580-595; these read ATERSINDFRY and RNHD…RSNR.

This sequence belongs to the WD repeat KATNB1 family. Component of KTN80-KTN1 complexes composed of a hexamer of KTN1-KTN80 heterodimers that sense microtubule (MT) geometry to confer precise MT severing. Interacts directly with AAA1/KTN1, and weakly with KTN80.1 and KTN80.3. As to expression, expressed in siliques, flowers, leaves, stems and roots.

It localises to the cytoplasm. The protein localises to the cytoskeleton. Its function is as follows. May participate in a complex which severs microtubules in an ATP-dependent manner. This activity may promote rapid reorganization of cellular microtubule arrays. Confers precision to microtubule (MT) severing by specific targeting of KTN1 to MT cleavage sites such as crossover or branching nucleation sites. Together with other KTN80s, regulates cell elongation by modulating MT organization. The sequence is that of Katanin p80 WD40 repeat-containing subunit B1 homolog KTN80.4 from Arabidopsis thaliana (Mouse-ear cress).